The primary structure comprises 914 residues: Translation initiation factor IF-2 (914 aa).

Disordered stretches follow at residues 246–271 (EDGE…KKKG) and 293–313 (SGMD…QRRM). The segment covering 249-266 (EAAKKKAAKPDGGEDVGV) has biased composition (basic and acidic residues). In terms of domain architecture, tr-type G spans 411–581 (TRPPVVTIMG…LAEAEIRELK (171 aa)). The tract at residues 420-427 (GHVDHGKT) is G1. 420-427 (GHVDHGKT) is a binding site for GTP. Residues 445 to 449 (GITQH) are G2. The G3 stretch occupies residues 467-470 (DTPG). Residues 467 to 471 (DTPGH) and 521 to 524 (NKID) contribute to the GTP site. The segment at 521–524 (NKID) is G4. The G5 stretch occupies residues 557 to 559 (SAK).

This sequence belongs to the TRAFAC class translation factor GTPase superfamily. Classic translation factor GTPase family. IF-2 subfamily.

The protein localises to the cytoplasm. One of the essential components for the initiation of protein synthesis. Protects formylmethionyl-tRNA from spontaneous hydrolysis and promotes its binding to the 30S ribosomal subunits. Also involved in the hydrolysis of GTP during the formation of the 70S ribosomal complex. The sequence is that of Translation initiation factor IF-2 from Chlorobaculum tepidum (strain ATCC 49652 / DSM 12025 / NBRC 103806 / TLS) (Chlorobium tepidum).